Reading from the N-terminus, the 169-residue chain is Respiratory growth induced protein 1 (169 aa).

Belongs to the RGI1 family.

It is found in the cell membrane. Its function is as follows. Involved in the control of energetic metabolism and significantly contribute to cell fitness, especially under respiratory growth conditions. This is Respiratory growth induced protein 1 (RGI1) from Eremothecium gossypii (strain ATCC 10895 / CBS 109.51 / FGSC 9923 / NRRL Y-1056) (Yeast).